Consider the following 325-residue polypeptide: RepFIB replication protein A (325 aa).

A disordered region spans residues 279-298 (APNDESKENPLPPSPAEKVS).

Belongs to the initiator RepB protein family.

Its function is as follows. This protein is essential for plasmid replication; it is involved in copy control functions. In vitro, binds to the DNA repeat units, BCDD'D'', EFG and HIJ. In Escherichia coli, this protein is RepFIB replication protein A (repA).